A 490-amino-acid chain; its full sequence is Ribosome biogenesis protein YTM1 (490 aa).

The interval 1-22 is disordered; that stretch reads MDGLEDGPLDASTATSQKPQRQ. The segment at 23–104 is ubiquitin-like (UBL) domain; the sequence is VRLKLTSRHE…ETTLDVEYVR (82 aa). WD repeat units lie at residues 116–168, 175–213, 224–263, 298–338, 340–379, 385–425, and 449–487; these read LHDD…IALS, GHTASVKCARMVSPSQIISSGLDRTVRLWKYTESEDGFS, GHKGSVDSISMHAQSHRILSASADHSVGFWSTRKSENPAA, SHTA…LVDT, TASHSLLSVSHMPELSLLASGTSARHITLIDPRASATTVS, GHTN…TDKD, and GEGVKVFDVCWDKSVGIVSSGEDKMIQINRGEGVLPNGG. The tract at residues 255 to 286 is disordered; the sequence is TRKSENPAAPESLLPSNTSRSSKRRKLNSSVS.

Belongs to the WD repeat WDR12/YTM1 family. As to quaternary structure, component of the NOP7 complex, composed of ERB1, NOP7 and YTM1. The complex is held together by ERB1, which interacts with NOP7 via its N-terminal domain and with YTM1 via a high-affinity interaction between the seven-bladed beta-propeller domains of the 2 proteins. The NOP7 complex associates with the 66S pre-ribosome. Interacts (via UBL domain) with MDN1 (via VWFA/MIDAS domain).

It is found in the nucleus. The protein resides in the nucleolus. The protein localises to the nucleoplasm. Functionally, component of the NOP7 complex, which is required for maturation of the 25S and 5.8S ribosomal RNAs and formation of the 60S ribosome. The protein is Ribosome biogenesis protein YTM1 of Ajellomyces capsulatus (strain NAm1 / WU24) (Darling's disease fungus).